Consider the following 333-residue polypeptide: Viral cathepsin (333 aa).

Positions 1–20 (MTKLLNFVILASVLTVTAHA) are cleaved as a signal peptide. A propeptide spans 21–124 (LTYDLNNSDE…VIKDEPQALL (104 aa)) (activation peptide). Disulfide bonds link C145–C186, C179–C219, and C272–C321. The active site involves C148. A glycan (N-linked (GlcNAc...) asparagine; by host) is linked at N170. Catalysis depends on residues H280 and N300.

Belongs to the peptidase C1 family. In terms of processing, synthesized as an inactive proenzyme and activated by proteolytic removal of the inhibitory propeptide.

It carries out the reaction Endopeptidase of broad specificity, hydrolyzing substrates of both cathepsin L and cathepsin B.. Cysteine protease that plays an essential role in host liquefaction to facilitate horizontal transmission of the virus. May participate in the degradation of foreign protein expressed by the baculovirus system. The sequence is that of Viral cathepsin (VCATH) from Cydia pomonella granulosis virus (isolate Mexico/1963) (CpGV).